The chain runs to 1196 residues: Phosphatidylinositol-3,5-bisphosphate 3-phosphatase MTMR3 (1196 aa).

The residue at position 8 (Ser-8) is a Phosphoserine. Residues 155–576 (EHVTSRFKNE…RNLMLWSAVY (422 aa)) form the Myotubularin phosphatase domain. Positions 326, 351, and 352 each coordinate a 1,2-diacyl-sn-glycero-3-phospho-(1D-myo-inositol-3,5-bisphosphate). Positions 326, 351, and 352 each coordinate a 1,2-diacyl-sn-glycero-3-phospho-(1D-myo-inositol-3-phosphate). The Phosphocysteine intermediate role is filled by Cys-413. A 1,2-diacyl-sn-glycero-3-phospho-(1D-myo-inositol-3,5-bisphosphate) contacts are provided by Ser-414, Asp-415, Gly-416, Trp-417, Asp-418, Arg-419, Lys-455, and Arg-459. A 1,2-diacyl-sn-glycero-3-phospho-(1D-myo-inositol-3-phosphate) is bound by residues Ser-414, Asp-415, Gly-416, Trp-417, Asp-418, and Arg-419. Residue Arg-459 participates in a 1,2-diacyl-sn-glycero-3-phospho-(1D-myo-inositol-3-phosphate) binding. Positions 587 to 612 (DDSCAPYPVPGTSPDEPPLSRLPKTR) are disordered. The span at 593 to 603 (YPVPGTSPDEP) shows a compositional bias: pro residues. Phosphoserine is present on residues Ser-613, Ser-633, Ser-647, and Ser-651. Disordered regions lie at residues 697 to 719 (TKEESGVEEPTHRGHTEVPEVKE) and 855 to 900 (ESGP…HRTS). Phosphoserine is present on Ser-907. The segment covering 993–1008 (NSHSGRPSTTSSPDQP) has biased composition (polar residues). The segment at 993–1019 (NSHSGRPSTTSSPDQPSRSHLDDDGMP) is disordered. Residues 1027–1060 (QRLRQIESGHQQEVETLKKQVQELKSRLESQYLT) are a coiled coil. Ser-1062 carries the phosphoserine modification. Residues 1117–1177 (DHLAAHCYAC…VCKSCYSSLH (61 aa)) form an FYVE-type zinc finger. Zn(2+) contacts are provided by Cys-1123, Cys-1126, Cys-1139, Cys-1142, Cys-1147, Cys-1150, Cys-1169, and Cys-1172.

The protein belongs to the protein-tyrosine phosphatase family. Non-receptor class myotubularin subfamily. In terms of assembly, forms heterodimers with MTMR4 that recruit both CEP55 and PLK1; occurs during early mitosis, regulates the phosphorylation of CEP55 by PLK1 and its recruitment to the midbody where it mediates cell abscission.

The protein localises to the cytoplasm. It is found in the cytosol. It localises to the membrane. The catalysed reaction is a 1,2-diacyl-sn-glycero-3-phospho-(1D-myo-inositol-3,5-bisphosphate) + H2O = a 1,2-diacyl-sn-glycero-3-phospho-(1D-myo-inositol-5-phosphate) + phosphate. It carries out the reaction a 1,2-diacyl-sn-glycero-3-phospho-(1D-myo-inositol-3-phosphate) + H2O = a 1,2-diacyl-sn-glycero-3-phospho-(1D-myo-inositol) + phosphate. The enzyme catalyses 1,2-dihexadecanoyl-sn-glycero-3-phospho-(1D-myo-inositol-3-phosphate) + H2O = 1,2-dihexadecanoyl-sn-glycero-3-phospho-(1D-myo-inositol) + phosphate. It catalyses the reaction 1,2-dioctanoyl-sn-glycero-3-phospho-(1-D-myo-inositol-3-phosphate) + H2O = 1,2-dioctanoyl-sn-glycero-3-phospho-(1D-myo-inositol) + phosphate. The catalysed reaction is 1,2-dihexadecanoyl-sn-glycero-3-phospho-(1D-myo-inositol-3,5-phosphate) + H2O = 1,2-dihexadecanoyl-sn-glycero-3-phospho-(1D-myo-inositol-5-phosphate) + phosphate. Lipid phosphatase that specifically dephosphorylates the D-3 position of phosphatidylinositol 3-phosphate and phosphatidylinositol 3,5-bisphosphate, generating phosphatidylinositol and phosphatidylinositol 5-phosphate. Decreases the levels of phosphatidylinositol 3-phosphate, a phospholipid found in cell membranes where it acts as key regulator of both cell signaling and intracellular membrane traffic. Could also have a molecular sequestering/adapter activity and regulate biological processes independently of its phosphatase activity. It includes the regulation of midbody abscission during mitotic cytokinesis. In Mus musculus (Mouse), this protein is Phosphatidylinositol-3,5-bisphosphate 3-phosphatase MTMR3.